The following is a 293-amino-acid chain: Ribonuclease HII (293 aa).

In terms of domain architecture, RNase H type-2 spans 81–271 (THIAGVDEAG…VREALGLPTG (191 aa)). 3 residues coordinate a divalent metal cation: aspartate 87, glutamate 88, and aspartate 180. The interval 273–293 (PPSALQAELFPEAPSRTGVKS) is disordered.

This sequence belongs to the RNase HII family. It depends on Mn(2+) as a cofactor. Mg(2+) serves as cofactor.

It localises to the cytoplasm. The enzyme catalyses Endonucleolytic cleavage to 5'-phosphomonoester.. In terms of biological role, endonuclease that specifically degrades the RNA of RNA-DNA hybrids. The chain is Ribonuclease HII from Myxococcus xanthus (strain DK1622).